We begin with the raw amino-acid sequence, 682 residues long: Potassium-transporting ATPase ATP-binding subunit (682 aa).

The next 4 helical transmembrane spans lie at 34–54 (PVMF…LAMV), 58–78 (IAGS…TVLF), 219–239 (IALT…TATL), and 254–274 (VLVA…LSAI). Residue aspartate 307 is the 4-aspartylphosphate intermediate of the active site. ATP is bound by residues aspartate 344, glutamate 348, 377–384 (FTAQSRMS), and lysine 395. Residues aspartate 518 and aspartate 522 each contribute to the Mg(2+) site. 3 consecutive transmembrane segments (helical) span residues 588–608 (FAII…LNVM), 616–636 (AILS…PLAL), and 662–682 (LVVP…LGLA).

Belongs to the cation transport ATPase (P-type) (TC 3.A.3) family. Type IA subfamily. As to quaternary structure, the system is composed of three essential subunits: KdpA, KdpB and KdpC.

Its subcellular location is the cell inner membrane. The catalysed reaction is K(+)(out) + ATP + H2O = K(+)(in) + ADP + phosphate + H(+). Functionally, part of the high-affinity ATP-driven potassium transport (or Kdp) system, which catalyzes the hydrolysis of ATP coupled with the electrogenic transport of potassium into the cytoplasm. This subunit is responsible for energy coupling to the transport system and for the release of the potassium ions to the cytoplasm. This is Potassium-transporting ATPase ATP-binding subunit from Salmonella paratyphi B (strain ATCC BAA-1250 / SPB7).